Reading from the N-terminus, the 329-residue chain is Src kinase-associated phosphoprotein 2 (329 aa).

Residues 58-95 (YAEDSEEEEDWDSNEGGSLQSERTDKDEEACEGAQQAP) are disordered. Positions 61–70 (DSEEEEDWDS) are enriched in acidic residues. The 104-residue stretch at 104–207 (SVFKAGYLEK…WVKQIDFVLK (104 aa)) folds into the PH domain. Residues 240–263 (EDMPSPPPKVEPVSKHPPPTPAVD) form a disordered region. Residues 243–260 (PSPPPKVEPVSKHPPPTP) are compositionally biased toward pro residues. The SH3 domain maps to 267–328 (DYANYYQGLW…PKDYLMELYA (62 aa)).

This sequence belongs to the SKAP family. Post-translationally, phosphorylated on tyrosines.

Its subcellular location is the cytoplasm. In terms of biological role, may be involved in B-cell and macrophage adhesion processes. May play a role in src signaling pathway. This chain is Src kinase-associated phosphoprotein 2 (skap2), found in Takifugu rubripes (Japanese pufferfish).